Reading from the N-terminus, the 231-residue chain is Orotidine 5'-phosphate decarboxylase (231 aa).

Substrate-binding positions include Asp11, Lys33, 60-69, Thr120, Arg181, Gln190, Gly210, and Arg211; that span reads DLKFHDIPNT. Catalysis depends on Lys62, which acts as the Proton donor.

Belongs to the OMP decarboxylase family. Type 1 subfamily. Homodimer.

It carries out the reaction orotidine 5'-phosphate + H(+) = UMP + CO2. The protein operates within pyrimidine metabolism; UMP biosynthesis via de novo pathway; UMP from orotate: step 2/2. Catalyzes the decarboxylation of orotidine 5'-monophosphate (OMP) to uridine 5'-monophosphate (UMP). This Pseudoalteromonas atlantica (strain T6c / ATCC BAA-1087) protein is Orotidine 5'-phosphate decarboxylase.